The sequence spans 346 residues: Methylthioribose-1-phosphate isomerase (346 aa).

Substrate-binding positions include 48 to 50, arginine 91, and glutamine 200; that span reads RGA. The active-site Proton donor is the aspartate 241. 251 to 252 is a binding site for substrate; the sequence is NK.

Belongs to the eIF-2B alpha/beta/delta subunits family. MtnA subfamily.

It carries out the reaction 5-(methylsulfanyl)-alpha-D-ribose 1-phosphate = 5-(methylsulfanyl)-D-ribulose 1-phosphate. Its pathway is amino-acid biosynthesis; L-methionine biosynthesis via salvage pathway; L-methionine from S-methyl-5-thio-alpha-D-ribose 1-phosphate: step 1/6. Functionally, catalyzes the interconversion of methylthioribose-1-phosphate (MTR-1-P) into methylthioribulose-1-phosphate (MTRu-1-P). The chain is Methylthioribose-1-phosphate isomerase from Picosynechococcus sp. (strain ATCC 27264 / PCC 7002 / PR-6) (Agmenellum quadruplicatum).